The chain runs to 456 residues: MSKIVVVGANHAGTACIKTMLTNYGDANEIVVFDQNSNISFLGCGMALWIGEQIAGPEGLFYSDKEELESLGAKVYMESPVQSIDYDAKTVTALVDGKNHVETYDKLIFATGSQPILPPIKGAEIKEGSLEFEATLENLQFVKLYQNSADVIAKLENKDIKRVAVVGAGYIGVELAEAFQRKGKEVVLIDVVDTCLAGYYDRDLTDLMAKNMEEHGIQLAFGETVKEVAGNGKVEKIITDKNEYDVDMVILAVGFRPNTTLGNGKIDLFRNGAFLVNKRQETSIPGVYAIGDCATIYDNATRDTNYIALASNAVRTGIVAAHNACGTDLEGIGVQGSNGISIYGLHMVSTGLTLEKAKRLGFDAAVTEYTDNQKPEFIEHGNFPVTIKIVYDKDSRRILGAQMAAREDMSMGIHMFSLAIQEGVTIEKLALTDIFFLPHFNKPYNYITMAALGAKD.

FAD is bound at residue Asn-10. His-11 acts as the Proton acceptor in catalysis. FAD contacts are provided by Ala-12, Asp-34, Gln-35, Cys-44, Val-81, Ala-110, Ser-113, Lys-143, and Tyr-170. The active-site Redox-active is Cys-44. Cysteine sulfinic acid (-SO2H) is present on Cys-44. The NAD(+) site is built by Ile-171, Asp-190, Tyr-199, and Gly-254. Position 292 (Asp-292) interacts with FAD. Ala-308 is a binding site for NAD(+). FAD is bound by residues Leu-309, Ala-310, and Ser-311. Gly-339 contacts NAD(+). Phe-436 contacts FAD.

Requires FAD as cofactor.

The enzyme catalyses 2 NADH + O2 + 2 H(+) = 2 NAD(+) + 2 H2O. Catalyzes the four-electron reduction of molecular oxygen to water. The polypeptide is NADH oxidase (Streptococcus pyogenes serotype M6 (strain ATCC BAA-946 / MGAS10394)).